A 643-amino-acid polypeptide reads, in one-letter code: Long-chain fatty acid transport protein 4 (643 aa).

The next 2 membrane-spanning stretches (helical) occupy residues 20–42 (LPWT…WRFI) and 139–156 (FVGL…AALI). 243 to 254 (YIYTSGTTGLPK) contributes to the AMP binding site.

The protein belongs to the ATP-dependent AMP-binding enzyme family. As to expression, expressed at highest levels in brain, testis, colon and kidney. Expressed at medium levels in heart and liver, small intestine and stomach. Expressed at low levels in peripheral leukocytes, bone marrow, skeletal muscle and aorta. Expressed in adipose tissue. Expressed in brain gray matter.

The protein resides in the endoplasmic reticulum membrane. It carries out the reaction a fatty acid(in) = a fatty acid(out). The enzyme catalyses (9Z,12Z)-octadecadienoate(out) = (9Z,12Z)-octadecadienoate(in). The catalysed reaction is (9Z)-octadecenoate(out) = (9Z)-octadecenoate(in). It catalyses the reaction hexadecanoate(out) = hexadecanoate(in). It carries out the reaction a long-chain fatty acid + ATP + CoA = a long-chain fatty acyl-CoA + AMP + diphosphate. The enzyme catalyses hexadecanoate + ATP + CoA = hexadecanoyl-CoA + AMP + diphosphate. The catalysed reaction is (E)-hexadec-2-enoate + ATP + CoA = (2E)-hexadecenoyl-CoA + AMP + diphosphate. It catalyses the reaction (9Z)-octadecenoate + ATP + CoA = (9Z)-octadecenoyl-CoA + AMP + diphosphate. It carries out the reaction (5Z,8Z,11Z,14Z)-eicosatetraenoate + ATP + CoA = (5Z,8Z,11Z,14Z)-eicosatetraenoyl-CoA + AMP + diphosphate. The enzyme catalyses a very long-chain fatty acid + ATP + CoA = a very long-chain fatty acyl-CoA + AMP + diphosphate. The catalysed reaction is tetracosanoate + ATP + CoA = tetracosanoyl-CoA + AMP + diphosphate. Its function is as follows. Mediates the levels of long-chain fatty acids (LCFA) in the cell by facilitating their transport across cell membranes. Appears to be the principal fatty acid transporter in small intestinal enterocytes. Also functions as an acyl-CoA ligase catalyzing the ATP-dependent formation of fatty acyl-CoA using LCFA and very-long-chain fatty acids (VLCFA) as substrates, which prevents fatty acid efflux from cells and might drive more fatty acid uptake. Plays a role in the formation of the epidermal barrier. Required for fat absorption in early embryogenesis. Probably involved in fatty acid transport across the blood barrier. Indirectly inhibits RPE65 via substrate competition and via production of VLCFA derivatives like lignoceroyl-CoA. Prevents light-induced degeneration of rods and cones. In Homo sapiens (Human), this protein is Long-chain fatty acid transport protein 4.